The sequence spans 1081 residues: DNA polymerase delta catalytic subunit (1081 aa).

Residues 1 to 22 (MTSKRPGGSSFQPEVKRKRESD) form a disordered region. The Zn(2+) site is built by C981, C984, C998, and C1001. The CysA-type zinc-finger motif lies at 981–1001 (CLGCKSVLPRAESENAVCKHC). Residues C1030, C1033, C1043, and C1048 each contribute to the [4Fe-4S] cluster site. Positions 1030–1048 (CQNCAKTMQDKVNCSARDC) match the CysB motif motif.

This sequence belongs to the DNA polymerase type-B family. Heterodimer with subunits of 125 kDa and 50 kDa. The 125 kDa subunit contains the polymerase active site and most likely the active site for the 3'-5' exonuclease activity. [4Fe-4S] cluster serves as cofactor.

It is found in the nucleus. The enzyme catalyses DNA(n) + a 2'-deoxyribonucleoside 5'-triphosphate = DNA(n+1) + diphosphate. Functionally, possesses two enzymatic activities: DNA synthesis (polymerase) and an exonucleolytic activity that degrades single stranded DNA in the 3'- to 5'-direction. Required with its accessory proteins (proliferating cell nuclear antigen (PCNA) and replication factor C (RFC) or activator 1) for leading strand synthesis. Also involved in completing Okazaki fragments initiated by the DNA polymerase alpha/primase complex. This is DNA polymerase delta catalytic subunit from Caenorhabditis elegans.